A 237-amino-acid polypeptide reads, in one-letter code: Leucyl/phenylalanyl-tRNA--protein transferase (237 aa).

The protein belongs to the L/F-transferase family.

It is found in the cytoplasm. The enzyme catalyses N-terminal L-lysyl-[protein] + L-leucyl-tRNA(Leu) = N-terminal L-leucyl-L-lysyl-[protein] + tRNA(Leu) + H(+). It carries out the reaction N-terminal L-arginyl-[protein] + L-leucyl-tRNA(Leu) = N-terminal L-leucyl-L-arginyl-[protein] + tRNA(Leu) + H(+). The catalysed reaction is L-phenylalanyl-tRNA(Phe) + an N-terminal L-alpha-aminoacyl-[protein] = an N-terminal L-phenylalanyl-L-alpha-aminoacyl-[protein] + tRNA(Phe). In terms of biological role, functions in the N-end rule pathway of protein degradation where it conjugates Leu, Phe and, less efficiently, Met from aminoacyl-tRNAs to the N-termini of proteins containing an N-terminal arginine or lysine. In Aromatoleum aromaticum (strain DSM 19018 / LMG 30748 / EbN1) (Azoarcus sp. (strain EbN1)), this protein is Leucyl/phenylalanyl-tRNA--protein transferase.